The chain runs to 376 residues: 1-acyl-sn-glycerol-3-phosphate acyltransferase gamma (376 aa).

The Cytoplasmic segment spans residues Met-1–Arg-124. The HXXXXD motif signature appears at His-96–Asp-101. Residues Glu-125–Lys-145 traverse the membrane as a helical segment. The Lumenal portion of the chain corresponds to Arg-146–Thr-316. A helical membrane pass occupies residues Ile-317–Leu-339. The Cytoplasmic segment spans residues Thr-340 to Glu-376.

This sequence belongs to the 1-acyl-sn-glycerol-3-phosphate acyltransferase family. In terms of tissue distribution, widely expressed. Mainly expressed in testis, kidney and liver (at protein level).

Its subcellular location is the endoplasmic reticulum membrane. It localises to the nucleus envelope. The catalysed reaction is a 1-acyl-sn-glycero-3-phosphate + an acyl-CoA = a 1,2-diacyl-sn-glycero-3-phosphate + CoA. It catalyses the reaction pentadecanoyl-CoA + 1-(9Z-octadecenoyl)-sn-glycero-3-phosphate = 1-(9Z)-octadecenoyl-2-pentadecanoyl-sn-glycero-3-phosphate + CoA. It carries out the reaction heptadecanoyl-CoA + 1-(9Z-octadecenoyl)-sn-glycero-3-phosphate = 1-(9Z)-octadecenoyl-2-heptadecanoyl-sn-glycero-3-phosphate + CoA. The enzyme catalyses 1-(9Z-octadecenoyl)-sn-glycero-3-phosphate + octadecanoyl-CoA = 1-(9Z-octadecenoyl)-2-octadecanoyl-sn-glycero-3-phosphate + CoA. The catalysed reaction is nonadecanoyl-CoA + 1-(9Z-octadecenoyl)-sn-glycero-3-phosphate = 1-(9Z)-octadecenoyl-2-nonadecanoyl-sn-glycero-3-phosphate + CoA. It catalyses the reaction 1-(9Z-octadecenoyl)-sn-glycero-3-phosphate + (5Z,8Z,11Z,14Z)-eicosatetraenoyl-CoA = 1-(9Z)-octadecenoyl-2-(5Z,8Z,11Z,14Z)-eicosatetraenoyl-sn-glycero-3-phosphate + CoA. It carries out the reaction 1-(9Z-octadecenoyl)-sn-glycero-3-phosphate + (9Z)-octadecenoyl-CoA = 1,2-di-(9Z-octadecenoyl)-sn-glycero-3-phosphate + CoA. The enzyme catalyses 1-(9Z-octadecenoyl)-sn-glycero-3-phosphate + (9Z,12Z)-octadecadienoyl-CoA = 1-(9Z)-octadecenoyl-2-(9Z,12Z)-octadecadienoyl-sn-glycero-3-phosphate + CoA. The catalysed reaction is 1-(9Z-octadecenoyl)-sn-glycero-3-phosphocholine + (5Z,8Z,11Z,14Z)-eicosatetraenoyl-CoA = 1-(9Z)-octadecenoyl-2-(5Z,8Z,11Z,14Z)-icosatetraenoyl-sn-glycero-3-phosphocholine + CoA. It catalyses the reaction 1-(9Z-octadecenoyl)-sn-glycero-3-phospho-(1D-myo-inositol) + (5Z,8Z,11Z,14Z)-eicosatetraenoyl-CoA = 1-(9Z-octadecenoyl)-2-(5Z,8Z,11Z,14Z-eicosatetraenoyl)-sn-glycero-3-phospho-1D-myo-inositol + CoA. It carries out the reaction 1-(9Z-octadecenoyl)-sn-glycero-3-phospho-L-serine + (5Z,8Z,11Z,14Z)-eicosatetraenoyl-CoA = 1-(9Z-octadecenoyl)-2-(5Z,8Z,11Z,14Z-eicosatetraenoyl)-sn-glycero-3-phospho-L-serine + CoA. The enzyme catalyses 1-hexadecanoyl-sn-glycero-3-phosphate + (9Z)-octadecenoyl-CoA = 1-hexadecanoyl-2-(9Z-octadecenoyl)-sn-glycero-3-phosphate + CoA. The catalysed reaction is 1-hexadecanoyl-sn-glycero-3-phosphate + (5Z,8Z,11Z,14Z)-eicosatetraenoyl-CoA = 1-hexadecanoyl-2-(5Z,8Z,11Z,14Z-eicosatetraenoyl)-sn-glycero-3-phosphate + CoA. It catalyses the reaction 1-heptadecanoyl-sn-glycero-3-phosphate + (5Z,8Z,11Z,14Z)-eicosatetraenoyl-CoA = 1-heptadecanoyl-2-(5Z,8Z,11Z,14Z)-eicosatetraenoyl-sn-glycero-3-phosphate + CoA. It carries out the reaction 1-octadecanoyl-sn-glycero-3-phosphate + (9Z)-octadecenoyl-CoA = 1-octadecanoyl-2-(9Z-octadecenoyl)-sn-glycero-3-phosphate + CoA. The enzyme catalyses 1-octadecanoyl-sn-glycero-3-phosphate + (5Z,8Z,11Z,14Z)-eicosatetraenoyl-CoA = 1-octadecanoyl-2-(5Z,8Z,11Z,14Z-eicosatetraenoyl)-sn-glycero-3-phosphate + CoA. The catalysed reaction is 1-(9Z-octadecenoyl)-sn-glycero-3-phosphate + hexadecanoyl-CoA = 1-hexadecanoyl-2-(9Z-octadecenoyl)-sn-glycero-3-phosphate + CoA. It catalyses the reaction 1-O-(9Z-octadecenyl)-sn-glycero-3-phosphate + (5Z,8Z,11Z,14Z)-eicosatetraenoyl-CoA = 1-O-(9Z-octadecenyl)-2-(5Z,8Z,11Z,14Z-eicosatetraenoyl)-sn-glycero-3-phosphate + CoA. It carries out the reaction a 1-acyl-sn-glycero-3-phospho-(1D-myo-inositol) + (5Z,8Z,11Z,14Z)-eicosatetraenoyl-CoA = a 1-acyl-2-(5Z,8Z,11Z,14Z-eicosatetraenoyl)-sn-glycero-3-phospho-(1D-myo-inositol) + CoA. It functions in the pathway phospholipid metabolism; CDP-diacylglycerol biosynthesis; CDP-diacylglycerol from sn-glycerol 3-phosphate: step 2/3. In males, activity increases in an age-dependent fashion, maybe derived from the induction by sex-hormones. Converts 1-acyl-sn-glycerol-3-phosphate (lysophosphatidic acid or LPA) into 1,2-diacyl-sn-glycerol-3-phosphate (phosphatidic acid or PA) by incorporating an acyl moiety at the sn-2 position of the glycerol backbone. Acts on LPA containing saturated or unsaturated fatty acids C16:0-C20:4 at the sn-1 position using C18:1, C20:4 or C18:2-CoA as the acyl donor. Also acts on lysophosphatidylcholine, lysophosphatidylinositol and lysophosphatidylserine using C18:1 or C20:4-CoA. Has a preference for arachidonoyl-CoA as a donor. Also has a modest lysophosphatidylinositol acyltransferase (LPIAT) activity, converts lysophosphatidylinositol (LPI) into phosphatidylinositol. In Mus musculus (Mouse), this protein is 1-acyl-sn-glycerol-3-phosphate acyltransferase gamma.